A 147-amino-acid polypeptide reads, in one-letter code: Ribonuclease H (147 aa).

Positions 1–142 constitute an RNase H type-1 domain; sequence MREVIIYTDG…CDELARAAIA (142 aa). Asp9, Glu47, Asp69, and Asp134 together coordinate Mg(2+).

It belongs to the RNase H family. Monomer. Mg(2+) serves as cofactor.

It localises to the cytoplasm. The enzyme catalyses Endonucleolytic cleavage to 5'-phosphomonoester.. Its function is as follows. Endonuclease that specifically degrades the RNA of RNA-DNA hybrids. This is Ribonuclease H from Symbiobacterium thermophilum (strain DSM 24528 / JCM 14929 / IAM 14863 / T).